The sequence spans 223 residues: AMSH-like ubiquitin thioesterase 2 (223 aa).

The 129-residue stretch at 49–177 folds into the MPN domain; that stretch reads VHISERLLED…YGIFKLTDPG (129 aa). Residues His-127, His-129, Asp-140, His-142, Cys-185, His-191, and His-193 each coordinate Zn(2+). A JAMM motif motif is present at residues 127 to 140; the sequence is HTHPSQGCFMSSVD.

It belongs to the peptidase M67C family. Requires Zn(2+) as cofactor.

In terms of biological role, zinc metalloprotease that cleaves 'Lys-48'- and 'Lys-63'-linked polyubiquitin chains. The chain is AMSH-like ubiquitin thioesterase 2 (AMSH2) from Arabidopsis thaliana (Mouse-ear cress).